Consider the following 171-residue polypeptide: Peptide deformylase (171 aa).

Residues Cys-91 and His-133 each coordinate Fe cation. Residue Glu-134 is part of the active site. Residue His-137 coordinates Fe cation.

The protein belongs to the polypeptide deformylase family. Fe(2+) is required as a cofactor.

It carries out the reaction N-terminal N-formyl-L-methionyl-[peptide] + H2O = N-terminal L-methionyl-[peptide] + formate. Its function is as follows. Removes the formyl group from the N-terminal Met of newly synthesized proteins. Requires at least a dipeptide for an efficient rate of reaction. N-terminal L-methionine is a prerequisite for activity but the enzyme has broad specificity at other positions. The sequence is that of Peptide deformylase from Hamiltonella defensa subsp. Acyrthosiphon pisum (strain 5AT).